Consider the following 165-residue polypeptide: Histone H1-like protein HC2 (165 aa).

Composition is skewed to basic residues over residues 1-50 (MLGV…KTVA) and 59-80 (PVAK…KKTV). A disordered region spans residues 1-80 (MLGVQKKRST…VRKVAAKKTV (80 aa)).

The protein belongs to the histone H1/H5 family. HCT subfamily.

Might have a role in establishing the nucleoid structure of elementary bodies. The polypeptide is Histone H1-like protein HC2 (hctB) (Chlamydia trachomatis).